Consider the following 329-residue polypeptide: GDP-mannose transporter (329 aa).

Topologically, residues Met-1–His-13 are cytoplasmic. A helical membrane pass occupies residues Ile-14–Val-34. Over Thr-35–Lys-44 the chain is Lumenal. Residues Phe-45–Leu-65 traverse the membrane as a helical segment. The Cytoplasmic portion of the chain corresponds to Leu-66–Lys-79. A helical membrane pass occupies residues Val-80 to Ser-100. Topologically, residues Arg-101 to Pro-109 are lumenal. A helical membrane pass occupies residues Ile-110–Phe-130. At Gly-131–Arg-133 the chain is on the cytoplasmic side. The helical transmembrane segment at Val-134–Leu-154 threads the bilayer. The Lumenal portion of the chain corresponds to Gly-155–Gly-174. A helical transmembrane segment spans residues Leu-175–Ile-195. The Cytoplasmic portion of the chain corresponds to Met-196 to Asn-214. The helical transmembrane segment at Asn-215 to Ala-235 threads the bilayer. Over Asn-236–Tyr-245 the chain is Lumenal. A glycan (N-linked (GlcNAc...) asparagine) is linked at Asn-240. A helical transmembrane segment spans residues Ile-246–Cys-266. Residues Val-267 to Thr-273 lie on the Cytoplasmic side of the membrane. A helical membrane pass occupies residues Thr-274–Phe-294. Over Asp-295–Lys-298 the chain is Lumenal. A helical membrane pass occupies residues Asn-299–Ala-319. At Lys-320–Asn-329 the chain is on the cytoplasmic side.

Belongs to the TPT transporter family. SLC35D subfamily. Homooligomer.

Its subcellular location is the golgi apparatus membrane. It localises to the cytoplasmic vesicle membrane. It is found in the endoplasmic reticulum membrane. In terms of biological role, involved in the import of GDP-mannose from the cytoplasm into the Golgi lumen. In Eremothecium gossypii (strain ATCC 10895 / CBS 109.51 / FGSC 9923 / NRRL Y-1056) (Yeast), this protein is GDP-mannose transporter (VRG4).